The sequence spans 127 residues: Probable tautomerase YusQ (127 aa).

Proline 2 (proton acceptor; via imino nitrogen) is an active-site residue.

The protein belongs to the 4-oxalocrotonate tautomerase family.

This chain is Probable tautomerase YusQ (yusQ), found in Bacillus subtilis (strain 168).